The sequence spans 156 residues: Small ribosomal subunit protein bS16 (156 aa).

The interval 114–156 is disordered; it reads ENEPVAEAITPKKKKAAKADEAKAEDTAADAEAPAADAEAADK. Positions 130 to 139 are enriched in basic and acidic residues; that stretch reads AKADEAKAED. Low complexity predominate over residues 143–156; that stretch reads DAEAPAADAEAADK.

This sequence belongs to the bacterial ribosomal protein bS16 family.

This is Small ribosomal subunit protein bS16 from Rhodococcus erythropolis (strain PR4 / NBRC 100887).